Reading from the N-terminus, the 143-residue chain is NADH-quinone oxidoreductase subunit A (143 aa).

A run of 3 helical transmembrane segments spans residues 7-27 (GFGN…GGYL), 63-83 (FYVV…LYPW), and 93-113 (FALF…AYAW).

This sequence belongs to the complex I subunit 3 family. As to quaternary structure, NDH-1 is composed of 14 different subunits. Subunits NuoA, H, J, K, L, M, N constitute the membrane sector of the complex.

It is found in the cell inner membrane. The catalysed reaction is a quinone + NADH + 5 H(+)(in) = a quinol + NAD(+) + 4 H(+)(out). In terms of biological role, NDH-1 shuttles electrons from NADH, via FMN and iron-sulfur (Fe-S) centers, to quinones in the respiratory chain. The immediate electron acceptor for the enzyme in this species is believed to be a menaquinone. Couples the redox reaction to proton translocation (for every two electrons transferred, four hydrogen ions are translocated across the cytoplasmic membrane), and thus conserves the redox energy in a proton gradient. This Chlorobium limicola (strain DSM 245 / NBRC 103803 / 6330) protein is NADH-quinone oxidoreductase subunit A.